The chain runs to 338 residues: Ketol-acid reductoisomerase (NADP(+)) (338 aa).

One can recognise a KARI N-terminal Rossmann domain in the interval 1–181 (MKVFYDKDCD…GGGRTGIIET (181 aa)). NADP(+) contacts are provided by residues 24-27 (YGSQ), Arg-47, Ser-50, Thr-52, and 82-85 (DEFQ). His-107 is an active-site residue. Position 133 (Gly-133) interacts with NADP(+). In terms of domain architecture, KARI C-terminal knotted spans 182–327 (TFKDETETDL…EKLRSMMPWI (146 aa)). Asp-190, Glu-194, Glu-226, and Glu-230 together coordinate Mg(2+). A substrate-binding site is contributed by Ser-251.

Belongs to the ketol-acid reductoisomerase family. Requires Mg(2+) as cofactor.

The enzyme catalyses (2R)-2,3-dihydroxy-3-methylbutanoate + NADP(+) = (2S)-2-acetolactate + NADPH + H(+). The catalysed reaction is (2R,3R)-2,3-dihydroxy-3-methylpentanoate + NADP(+) = (S)-2-ethyl-2-hydroxy-3-oxobutanoate + NADPH + H(+). It participates in amino-acid biosynthesis; L-isoleucine biosynthesis; L-isoleucine from 2-oxobutanoate: step 2/4. It functions in the pathway amino-acid biosynthesis; L-valine biosynthesis; L-valine from pyruvate: step 2/4. Its function is as follows. Involved in the biosynthesis of branched-chain amino acids (BCAA). Catalyzes an alkyl-migration followed by a ketol-acid reduction of (S)-2-acetolactate (S2AL) to yield (R)-2,3-dihydroxy-isovalerate. In the isomerase reaction, S2AL is rearranged via a Mg-dependent methyl migration to produce 3-hydroxy-3-methyl-2-ketobutyrate (HMKB). In the reductase reaction, this 2-ketoacid undergoes a metal-dependent reduction by NADPH to yield (R)-2,3-dihydroxy-isovalerate. This chain is Ketol-acid reductoisomerase (NADP(+)), found in Pseudomonas syringae pv. tomato (strain ATCC BAA-871 / DC3000).